A 296-amino-acid chain; its full sequence is (3R)-3-[(carboxymethyl)amino]fatty acid oxygenase/decarboxylase (296 aa).

(3R)-3-[(carboxymethyl)amino]butanoate is bound by residues Tyr66, Tyr71, and Gly98. 3 residues coordinate (3R)-3-{[carboxy(hydroxy)methyl]amino}butanoate: Tyr66, Tyr71, and Gly98. Fe(2+)-binding residues include His102 and Asp104. Residues Tyr105 and Lys163 each coordinate (3R)-3-[(carboxymethyl)amino]butanoate. Positions 105 and 163 each coordinate (3R)-3-{[carboxy(hydroxy)methyl]amino}butanoate. A Fe(2+)-binding site is contributed by His265. His269 lines the 2-oxoglutarate pocket. Arg280 is a (3R)-3-[(carboxymethyl)amino]butanoate binding site. Arg280 serves as a coordination point for (3R)-3-{[carboxy(hydroxy)methyl]amino}butanoate.

Belongs to the TfdA dioxygenase family. The cofactor is Fe(2+).

The catalysed reaction is a (3R)-3-[(carboxymethyl)amino]fatty acid + 2 2-oxoglutarate + 2 O2 = a (3R)-3-isocyanyl-fatty acid + 2 succinate + 3 CO2 + 2 H2O. The enzyme catalyses a (3R)-3-[(carboxymethyl)amino]fatty acid + 2-oxoglutarate + O2 = a (3R)-3-{[carboxy(hydroxy)methyl]amino}fatty acid + succinate + CO2. It carries out the reaction a (3R)-3-{[carboxy(hydroxy)methyl]amino}fatty acid + 2-oxoglutarate + O2 = a (3R)-3-isocyanyl-fatty acid + succinate + 2 CO2 + 2 H2O. It catalyses the reaction (3R)-3-[(carboxymethyl)amino]butanoate + 2 2-oxoglutarate + 2 O2 = (3R)-3-isocyanylbutanoate + 2 succinate + 3 CO2 + 2 H2O. The catalysed reaction is (3R)-3-[(carboxymethyl)amino]butanoate + 2-oxoglutarate + O2 = (3R)-3-{[carboxy(hydroxy)methyl]amino}butanoate + succinate + CO2. The enzyme catalyses (3R)-3-{[carboxy(hydroxy)methyl]amino}butanoate + 2-oxoglutarate + O2 = (3R)-3-isocyanylbutanoate + succinate + 2 CO2 + 2 H2O. Functionally, involved in the biosynthesis of a unique class of isonitrile lipopeptides (INLPs). Catalyzes the conversion of (3R)-3-[(carboxymethyl)amino]fatty acids such as (3R)-3-[(carboxymethyl)amino]butanoate (CABA) to (3R)-3-isocyanylbutanoate (INBA) through an oxidative decarboxylation mechanism, thereby generating the isonitrile group of INLPs. The polypeptide is (3R)-3-[(carboxymethyl)amino]fatty acid oxygenase/decarboxylase (Streptomyces coeruleorubidus).